Here is a 548-residue protein sequence, read N- to C-terminus: Chaperonin GroEL (548 aa).

ATP contacts are provided by residues T30–P33, K51, D87–T91, G415, N479–A481, and D495.

The protein belongs to the chaperonin (HSP60) family. Forms a cylinder of 14 subunits composed of two heptameric rings stacked back-to-back. Interacts with the co-chaperonin GroES.

It is found in the cytoplasm. The catalysed reaction is ATP + H2O + a folded polypeptide = ADP + phosphate + an unfolded polypeptide.. Together with its co-chaperonin GroES, plays an essential role in assisting protein folding. The GroEL-GroES system forms a nano-cage that allows encapsulation of the non-native substrate proteins and provides a physical environment optimized to promote and accelerate protein folding. This chain is Chaperonin GroEL, found in Oleidesulfovibrio alaskensis (strain ATCC BAA-1058 / DSM 17464 / G20) (Desulfovibrio alaskensis).